The chain runs to 343 residues: tRNA N6-adenosine threonylcarbamoyltransferase (343 aa).

The Fe cation site is built by H108 and H112. Substrate-binding positions include 129 to 133, D161, E178, and S258; that span reads LISGG. A Fe cation-binding site is contributed by D286.

Belongs to the KAE1 / TsaD family. Fe(2+) serves as cofactor.

The protein resides in the cytoplasm. It carries out the reaction L-threonylcarbamoyladenylate + adenosine(37) in tRNA = N(6)-L-threonylcarbamoyladenosine(37) in tRNA + AMP + H(+). Functionally, required for the formation of a threonylcarbamoyl group on adenosine at position 37 (t(6)A37) in tRNAs that read codons beginning with adenine. Is probably involved in the transfer of the threonylcarbamoyl moiety of threonylcarbamoyl-AMP (TC-AMP) to the N6 group of A37. In Pyrobaculum aerophilum (strain ATCC 51768 / DSM 7523 / JCM 9630 / CIP 104966 / NBRC 100827 / IM2), this protein is tRNA N6-adenosine threonylcarbamoyltransferase.